Here is a 179-residue protein sequence, read N- to C-terminus: Large ribosomal subunit protein uL5 (179 aa).

This sequence belongs to the universal ribosomal protein uL5 family. As to quaternary structure, part of the 50S ribosomal subunit; part of the 5S rRNA/L5/L18/L25 subcomplex. Contacts the 5S rRNA and the P site tRNA. Forms a bridge to the 30S subunit in the 70S ribosome.

Functionally, this is one of the proteins that bind and probably mediate the attachment of the 5S RNA into the large ribosomal subunit, where it forms part of the central protuberance. In the 70S ribosome it contacts protein S13 of the 30S subunit (bridge B1b), connecting the 2 subunits; this bridge is implicated in subunit movement. Contacts the P site tRNA; the 5S rRNA and some of its associated proteins might help stabilize positioning of ribosome-bound tRNAs. The protein is Large ribosomal subunit protein uL5 of Staphylococcus haemolyticus (strain JCSC1435).